A 288-amino-acid chain; its full sequence is Purine nucleoside phosphorylase (288 aa).

65-66 lines the phosphate pocket; sequence RN. M201 contacts substrate. T202 lines the phosphate pocket.

This sequence belongs to the PNP/MTAP phosphorylase family. MTAP subfamily. As to quaternary structure, homotrimer.

The protein resides in the cytoplasm. The protein localises to the nucleus. The catalysed reaction is a purine D-ribonucleoside + phosphate = a purine nucleobase + alpha-D-ribose 1-phosphate. The protein operates within purine metabolism; purine nucleoside salvage. In terms of biological role, purine nucleoside phosphorylase involved in purine salvage. This is Purine nucleoside phosphorylase from Drosophila pseudoobscura pseudoobscura (Fruit fly).